The sequence spans 135 residues: Fatty acid-binding protein 5 (135 aa).

At Ala2 the chain carries N-acetylalanine. Residue Lys17 is modified to N6-acetyllysine. Tyr22 carries the phosphotyrosine; by Tyr-kinases modification. The Nuclear localization signal motif lies at 24–34; it reads KEVGVGMALRK. The N-eicosanoyl ethanolamine site is built by Cys43 and Arg109. An intrachain disulfide couples Cys120 to Cys127. Residue 129-131 participates in (9Z,12Z)-octadecadienoate binding; sequence RVY. Tyr131 contacts N-eicosanoyl ethanolamine. Tyr131 contributes to the hexadecanoate binding site. Tyr131 is modified (phosphotyrosine).

It belongs to the calycin superfamily. Fatty-acid binding protein (FABP) family. As to quaternary structure, monomer. Most abundant in lens and retina (found in the mueller cells), moderately abundant in heart and testis (found in the Sertoli cells), and present in very low amounts in lung.

Its subcellular location is the cytoplasm. The protein resides in the nucleus. It is found in the synapse. The protein localises to the postsynaptic density. It localises to the secreted. The catalysed reaction is hexadecanoate(out) = hexadecanoate(in). The enzyme catalyses (9Z,12Z)-octadecadienoate(out) = (9Z,12Z)-octadecadienoate(in). It carries out the reaction (9Z)-octadecenoate(out) = (9Z)-octadecenoate(in). Its function is as follows. Intracellular carrier for long-chain fatty acids and related active lipids, such as endocannabinoids, that regulate the metabolism and actions of the ligands they bind. In addition to the cytosolic transport, selectively delivers specific fatty acids from the cytosol to the nucleus, wherein they activate nuclear receptors. Delivers retinoic acid to the nuclear receptor peroxisome proliferator-activated receptor delta; which promotes proliferation and survival. May also serve as a synaptic carrier of endocannabinoid at central synapses and thus controls retrograde endocannabinoid signaling. Modulates inflammation by regulating PTGES induction via NF-kappa-B activation, and prostaglandin E2 (PGE2) biosynthesis during inflammation. The polypeptide is Fatty acid-binding protein 5 (FABP5) (Bos taurus (Bovine)).